Consider the following 203-residue polypeptide: Ras-like protein 1 (203 aa).

Position 17-24 (17-24 (GGGGVGKS)) interacts with GTP. The Effector region motif lies at 39–47 (YDPTIEDSY). GTP is bound by residues 64 to 68 (DTAGQ) and 123 to 126 (NKCD). C200 is subject to Cysteine methyl ester. C200 carries the S-farnesyl cysteine lipid modification. The propeptide at 201–203 (ILM) is removed in mature form.

This sequence belongs to the small GTPase superfamily. Ras family.

The protein resides in the cell membrane. The enzyme catalyses GTP + H2O = GDP + phosphate + H(+). Its activity is regulated as follows. Alternates between an inactive form bound to GDP and an active form bound to GTP. Activated by a guanine nucleotide-exchange factor (GEF) and inactivated by a GTPase-activating protein (GAP). This is Ras-like protein 1 (RAS1) from Mucor circinelloides f. lusitanicus (Mucor racemosus var. lusitanicus).